The chain runs to 563 residues: BOS complex subunit NCLN (563 aa).

An N-terminal signal peptide occupies residues 1–42; the sequence is MLEEAGEVLENVLKASCLPLGFIVFLPAVLLLVAPPLPAADA. Topologically, residues 43–522 are lumenal; it reads AHEFTVYRMQ…VMNAYRVKPA (480 aa). N-linked (GlcNAc...) asparagine glycans are attached at residues asparagine 241 and asparagine 428. A helical transmembrane segment spans residues 523–543; that stretch reads IFDLLLALCIGAYLGMAYTAV. The Cytoplasmic portion of the chain corresponds to 544–563; it reads QHFHVLYKTVQRLLLKAKAQ.

It belongs to the nicastrin family. Component of the back of Sec61 (BOS) complex, composed of NCLN/Nicalin, NOMO1 and TMEM147. The BOS complex is part of the multi-pass translocon (MPT) complex, composed of three subcomplexes, the GEL complex (composed of RAB5IF/OPTI and TMCO1), the BOS complex (composed of NCLN/Nicalin, NOMO1 and TMEM147) and the PAT complex (composed of WDR83OS/Asterix and CCDC47). The MPT complex associates with the SEC61 complex.

It is found in the endoplasmic reticulum membrane. Functionally, component of the multi-pass translocon (MPT) complex that mediates insertion of multi-pass membrane proteins into the lipid bilayer of membranes. The MPT complex takes over after the SEC61 complex: following membrane insertion of the first few transmembrane segments of proteins by the SEC61 complex, the MPT complex occludes the lateral gate of the SEC61 complex to promote insertion of subsequent transmembrane regions. May antagonize Nodal signaling and subsequent organization of axial structures during mesodermal patterning, via its interaction with NOMO. The sequence is that of BOS complex subunit NCLN (Ncln) from Rattus norvegicus (Rat).